Reading from the N-terminus, the 239-residue chain is Small ribosomal subunit protein uS2 (239 aa).

This sequence belongs to the universal ribosomal protein uS2 family.

The sequence is that of Small ribosomal subunit protein uS2 from Prochlorococcus marinus (strain MIT 9303).